Consider the following 406-residue polypeptide: Cysteine desulfurase (406 aa).

Lys226 carries the post-translational modification N6-(pyridoxal phosphate)lysine. Cys364 serves as the catalytic Cysteine persulfide intermediate.

This sequence belongs to the class-V pyridoxal-phosphate-dependent aminotransferase family. Csd subfamily. Homodimer. Interacts with SufE and the SufBCD complex composed of SufB, SufC and SufD. The interaction with SufE is required to mediate the direct transfer of the sulfur atom from the S-sulfanylcysteine. Requires pyridoxal 5'-phosphate as cofactor.

It localises to the cytoplasm. The catalysed reaction is (sulfur carrier)-H + L-cysteine = (sulfur carrier)-SH + L-alanine. The enzyme catalyses L-selenocysteine + AH2 = hydrogenselenide + L-alanine + A + H(+). Its pathway is cofactor biosynthesis; iron-sulfur cluster biosynthesis. In terms of biological role, cysteine desulfurases mobilize the sulfur from L-cysteine to yield L-alanine, an essential step in sulfur metabolism for biosynthesis of a variety of sulfur-containing biomolecules. Component of the suf operon, which is activated and required under specific conditions such as oxidative stress and iron limitation. Acts as a potent selenocysteine lyase in vitro, that mobilizes selenium from L-selenocysteine. Selenocysteine lyase activity is however unsure in vivo. The chain is Cysteine desulfurase from Klebsiella pneumoniae subsp. pneumoniae (strain ATCC 700721 / MGH 78578).